The primary structure comprises 99 residues: Large ribosomal subunit protein uL23 (99 aa).

This sequence belongs to the universal ribosomal protein uL23 family. In terms of assembly, part of the 50S ribosomal subunit. Contacts protein L29, and trigger factor when it is bound to the ribosome.

Functionally, one of the early assembly proteins it binds 23S rRNA. One of the proteins that surrounds the polypeptide exit tunnel on the outside of the ribosome. Forms the main docking site for trigger factor binding to the ribosome. This Azotobacter vinelandii (strain DJ / ATCC BAA-1303) protein is Large ribosomal subunit protein uL23.